A 335-amino-acid chain; its full sequence is Zinc transporter ZIP11 (335 aa).

The next 7 helical transmembrane spans lie at 12 to 32 (LLGTFFTWAMTAAGAALVFIF), 44 to 64 (LGFAAGVMLAASYWSLLAPAV), 72 to 92 (GFGAFAFFPVAVGFTLGAAFV), 187 to 207 (IALLILAITIHNIPEGLAVGV), 256 to 278 (FWYGQLSGMVEPLAGVFGAFAVV), 283 to 300 (VLPYALAFAAGAMVYVVM), and 315 to 335 (LASWASILGFVVMMSLDVGLG).

Belongs to the ZIP transporter (TC 2.A.5) family.

The protein localises to the cell membrane. It is found in the nucleus. Its subcellular location is the cytoplasm. The protein resides in the golgi apparatus. The enzyme catalyses Zn(2+)(in) = Zn(2+)(out). The catalysed reaction is Cu(2+)(in) = Cu(2+)(out). In terms of biological role, zinc importer that regulates cytosolic zinc concentrations either via zinc influx from the extracellular compartment or efflux from intracellular organelles such as Golgi apparatus. May transport copper ions as well. The transport mechanism remains to be elucidated. The sequence is that of Zinc transporter ZIP11 (Slc39a11) from Rattus norvegicus (Rat).